Reading from the N-terminus, the 391-residue chain is 3-ketoacyl-CoA thiolase (391 aa).

Residue C95 is the Acyl-thioester intermediate of the active site. Active-site proton acceptor residues include H347 and C377.

The protein belongs to the thiolase-like superfamily. Thiolase family. As to quaternary structure, heterotetramer of two alpha chains (FadB) and two beta chains (FadA).

It localises to the cytoplasm. The enzyme catalyses an acyl-CoA + acetyl-CoA = a 3-oxoacyl-CoA + CoA. It participates in lipid metabolism; fatty acid beta-oxidation. Its function is as follows. Catalyzes the final step of fatty acid oxidation in which acetyl-CoA is released and the CoA ester of a fatty acid two carbons shorter is formed. The protein is 3-ketoacyl-CoA thiolase of Ectopseudomonas mendocina (strain ymp) (Pseudomonas mendocina).